Reading from the N-terminus, the 963-residue chain is Ras-interacting protein 1 (963 aa).

Residues 1–10 (MLSGERKEGG) show a composition bias toward basic and acidic residues. Disordered stretches follow at residues 1-22 (MLSG…LPVG) and 35-118 (LGRR…AQRW). Residues 41-57 (SAASVKSSSSDTGSRSS) are compositionally biased toward low complexity. An Omega-N-methylarginine modification is found at R94. A compositionally biased stretch (gly residues) spans 96–113 (SGTGTTGSSGAGGPGTPG). One can recognise a Ras-associating domain in the interval 144 to 259 (PPGVLKIFGA…RRFELRGREE (116 aa)). Phosphoserine occurs at positions 188, 280, and 292. The segment at 267–356 (AFGAADSEGT…LSMAPGAADA (90 aa)) is disordered. A compositionally biased stretch (low complexity) spans 290–301 (AASGGAALASPG). A compositionally biased stretch (gly residues) spans 302 to 313 (PGTGSGAPAGSG). The segment covering 320-333 (NLSLRRSVSELSLQ) has biased composition (low complexity). A phosphoserine mark is found at S326, S328, S331, and S419. The Dilute domain maps to 600-897 (GRLARLIKEA…PPAEREAVDT (298 aa)).

Interacts with Ras family members that have been activated by GTP binding. Interacts with HRAS, RAP1A, RAP2, RRAS, RAF1 and RRAS2. Interacts with MYH9 and ARHGAP29. In terms of tissue distribution, highly expressed in heart. Detected at lower levels in placenta and pancreas.

It is found in the cytoplasm. Its subcellular location is the perinuclear region. The protein resides in the golgi apparatus. The protein localises to the golgi stack. Its function is as follows. Required for the proper formation of vascular structures that develop via both vasculogenesis and angiogenesis. Acts as a critical and vascular-specific regulator of GTPase signaling, cell architecture, and adhesion, which is essential for endothelial cell morphogenesis and blood vessel tubulogenesis. Regulates the activity of Rho GTPases in part by recruiting ARHGAP29 and suppressing RhoA signaling and dampening ROCK and MYH9 activities in endothelial cells. May act as effector for Golgi-bound HRAS and other Ras-like proteins. May promote HRAS-mediated transformation. Negative regulator of amino acid starvation-induced autophagy. This Homo sapiens (Human) protein is Ras-interacting protein 1 (RASIP1).